A 260-amino-acid chain; its full sequence is Manganese transport system ATP-binding protein MntA (260 aa).

One can recognise an ABC transporter domain in the interval isoleucine 10 to proline 245. Residue glycine 43 to serine 50 coordinates ATP.

The protein belongs to the ABC transporter superfamily.

In terms of biological role, part of an ATP-driven transport system for manganese. In Synechocystis sp. (strain ATCC 27184 / PCC 6803 / Kazusa), this protein is Manganese transport system ATP-binding protein MntA (mntA).